The chain runs to 208 residues: V-type ATP synthase subunit D (208 aa).

Belongs to the V-ATPase D subunit family.

In terms of biological role, produces ATP from ADP in the presence of a proton gradient across the membrane. This is V-type ATP synthase subunit D from Streptococcus pyogenes serotype M1.